A 127-amino-acid polypeptide reads, in one-letter code: uncharacterized protein (127 aa).

The interval 1 to 24 is disordered; the sequence is PLKTKPIDNNLPHRTGYNQASKQQ.

This is an uncharacterized protein from Homo sapiens (Human).